Consider the following 58-residue polypeptide: Keratin-associated protein 21-3 (58 aa).

Interacts with hair keratins.

Its function is as follows. In the hair cortex, hair keratin intermediate filaments are embedded in an interfilamentous matrix, consisting of hair keratin-associated proteins (KRTAP), which are essential for the formation of a rigid and resistant hair shaft through their extensive disulfide bond cross-linking with abundant cysteine residues of hair keratins. The matrix proteins include the high-sulfur and high-glycine-tyrosine keratins. In Homo sapiens (Human), this protein is Keratin-associated protein 21-3 (KRTAP21-3).